We begin with the raw amino-acid sequence, 400 residues long: Coenzyme A biosynthesis bifunctional protein CoaBC (400 aa).

The interval 1–190 is phosphopantothenoylcysteine decarboxylase; sequence MKLNGKHIVV…SQKQDLQGLN (190 aa). Catalysis depends on Cys-158, which acts as the Proton donor. The segment at 191 to 400 is phosphopantothenate--cysteine ligase; sequence VSITAGPTRE…EIIERYQKTL (210 aa). CTP is bound by residues 273–275, Asp-279, Lys-289, 305–308, Phe-324, Lys-338, and Lys-342; these read GCA and PDII.

The protein in the N-terminal section; belongs to the HFCD (homo-oligomeric flavin containing Cys decarboxylase) superfamily. In the C-terminal section; belongs to the PPC synthetase family. Mg(2+) serves as cofactor. It depends on FMN as a cofactor.

The catalysed reaction is N-[(R)-4-phosphopantothenoyl]-L-cysteine + H(+) = (R)-4'-phosphopantetheine + CO2. It catalyses the reaction (R)-4'-phosphopantothenate + L-cysteine + CTP = N-[(R)-4-phosphopantothenoyl]-L-cysteine + CMP + diphosphate + H(+). The protein operates within cofactor biosynthesis; coenzyme A biosynthesis; CoA from (R)-pantothenate: step 2/5. Its pathway is cofactor biosynthesis; coenzyme A biosynthesis; CoA from (R)-pantothenate: step 3/5. Functionally, catalyzes two sequential steps in the biosynthesis of coenzyme A. In the first step cysteine is conjugated to 4'-phosphopantothenate to form 4-phosphopantothenoylcysteine. In the second step the latter compound is decarboxylated to form 4'-phosphopantotheine. In Haemophilus influenzae (strain ATCC 51907 / DSM 11121 / KW20 / Rd), this protein is Coenzyme A biosynthesis bifunctional protein CoaBC.